A 65-amino-acid polypeptide reads, in one-letter code: U11-theraphotoxin-Cg1b (65 aa).

An N-terminal signal peptide occupies residues 1–21 (MKTTILVVILGLTLLFALSAA). A propeptide spanning residues 22–29 (TELKDEER) is cleaved from the precursor. Disulfide bonds link Cys31–Cys45, Cys38–Cys50, and Cys44–Cys57.

This sequence belongs to the neurotoxin 10 (Hwtx-1) family. 32 (Jztx-16) subfamily. As to expression, expressed by the venom gland.

The protein resides in the secreted. Functionally, probable ion channel inhibitor. This Chilobrachys guangxiensis (Chinese earth tiger tarantula) protein is U11-theraphotoxin-Cg1b.